The following is a 377-amino-acid chain: Protein-arginine rhamnosyltransferase (377 aa).

Residue tyrosine 15 coordinates dTDP-beta-L-rhamnose. The active-site Proton acceptor is the aspartate 17. Residues tyrosine 193, glutamine 255, and 271–275 (RGEDS) each bind dTDP-beta-L-rhamnose. Glutamate 273 is a catalytic residue.

This sequence belongs to the glycosyltransferase 104 family.

The enzyme catalyses dTDP-beta-L-rhamnose + L-arginyl-[protein] = N(omega)-(alpha-L-rhamnosyl)-L-arginyl-[protein] + dTDP + H(+). Functionally, protein-arginine rhamnosyltransferase that catalyzes the transfer of a single rhamnose to elongation factor P (EF-P) on 'Lys-32', a modification required for EF-P-dependent rescue of polyproline stalled ribosomes. This Pseudomonas putida (strain ATCC 47054 / DSM 6125 / CFBP 8728 / NCIMB 11950 / KT2440) protein is Protein-arginine rhamnosyltransferase.